Reading from the N-terminus, the 316-residue chain is L-lactate dehydrogenase 3 (316 aa).

The NAD(+) site is built by valine 16, aspartate 37, arginine 42, and tyrosine 68. A substrate-binding site is contributed by arginine 91. NAD(+) is bound by residues serine 104, 121–123 (ASN), and threonine 146. 123-126 (NPVD) contributes to the substrate binding site. Residue 151–154 (DSSR) coordinates substrate. 2 residues coordinate beta-D-fructose 1,6-bisphosphate: arginine 156 and histidine 171. Histidine 178 acts as the Proton acceptor in catalysis. Threonine 233 is a binding site for substrate.

Belongs to the LDH/MDH superfamily. LDH family. In terms of assembly, homotetramer.

The protein resides in the cytoplasm. The enzyme catalyses (S)-lactate + NAD(+) = pyruvate + NADH + H(+). Its pathway is fermentation; pyruvate fermentation to lactate; (S)-lactate from pyruvate: step 1/1. Allosterically activated by fructose 1,6-bisphosphate (FBP). Catalyzes the conversion of lactate to pyruvate. The chain is L-lactate dehydrogenase 3 from Bacillus anthracis.